We begin with the raw amino-acid sequence, 348 residues long: Hereditary hemochromatosis protein (348 aa).

A signal peptide spans Met1–Gly22. The tract at residues Arg23–Glu114 is alpha-1. At Arg23 to Val306 the chain is on the extracellular side. N-linked (GlcNAc...) asparagine glycans are attached at residues Asn110, Asn130, and Asn234. An alpha-2 region spans residues Ser115–Gln205. 2 disulfides stabilise this stretch: Cys124/Cys187 and Cys225/Cys282. Residues Val206–Trp297 are alpha-3. The region spanning Pro207 to Glu298 is the Ig-like C1-type domain. Positions Glu298 to Val306 are connecting peptide. The helical transmembrane segment at Ile307–Arg330 threads the bilayer. Residues Lys331–Glu348 lie on the Cytoplasmic side of the membrane.

Belongs to the MHC class I family. As to quaternary structure, binds TFR through the extracellular domain in a pH-dependent manner. As to expression, expressed in all tissues tested except brain.

It localises to the cell membrane. Functionally, binds to transferrin receptor (TFR) and reduces its affinity for iron-loaded transferrin. This Homo sapiens (Human) protein is Hereditary hemochromatosis protein (HFE).